A 231-amino-acid chain; its full sequence is DNA mismatch repair protein MutH (231 aa).

It belongs to the MutH family.

Its subcellular location is the cytoplasm. In terms of biological role, sequence-specific endonuclease that cleaves unmethylated GATC sequences. It is involved in DNA mismatch repair. In Klebsiella pneumoniae subsp. pneumoniae (strain ATCC 700721 / MGH 78578), this protein is DNA mismatch repair protein MutH.